The following is a 123-amino-acid chain: Small ribosomal subunit protein uS12 (123 aa).

Residue Asp-89 is modified to 3-methylthioaspartic acid.

The protein belongs to the universal ribosomal protein uS12 family. In terms of assembly, part of the 30S ribosomal subunit. Contacts proteins S8 and S17. May interact with IF1 in the 30S initiation complex.

Functionally, with S4 and S5 plays an important role in translational accuracy. Its function is as follows. Interacts with and stabilizes bases of the 16S rRNA that are involved in tRNA selection in the A site and with the mRNA backbone. Located at the interface of the 30S and 50S subunits, it traverses the body of the 30S subunit contacting proteins on the other side and probably holding the rRNA structure together. The combined cluster of proteins S8, S12 and S17 appears to hold together the shoulder and platform of the 30S subunit. This is Small ribosomal subunit protein uS12 from Acidiphilium cryptum (strain JF-5).